Reading from the N-terminus, the 252-residue chain is Pyridoxine 5'-phosphate synthase (252 aa).

Asn7 contacts 3-amino-2-oxopropyl phosphate. 9-10 contributes to the 1-deoxy-D-xylulose 5-phosphate binding site; it reads DH. Residue Arg18 coordinates 3-amino-2-oxopropyl phosphate. His43 serves as the catalytic Proton acceptor. 2 residues coordinate 1-deoxy-D-xylulose 5-phosphate: Arg45 and His50. The Proton acceptor role is filled by Glu70. Thr100 is a 1-deoxy-D-xylulose 5-phosphate binding site. His190 (proton donor) is an active-site residue. 3-amino-2-oxopropyl phosphate is bound by residues Gly191 and 212-213; that span reads GH.

This sequence belongs to the PNP synthase family. As to quaternary structure, homooctamer; tetramer of dimers.

It is found in the cytoplasm. It carries out the reaction 3-amino-2-oxopropyl phosphate + 1-deoxy-D-xylulose 5-phosphate = pyridoxine 5'-phosphate + phosphate + 2 H2O + H(+). Its pathway is cofactor biosynthesis; pyridoxine 5'-phosphate biosynthesis; pyridoxine 5'-phosphate from D-erythrose 4-phosphate: step 5/5. Functionally, catalyzes the complicated ring closure reaction between the two acyclic compounds 1-deoxy-D-xylulose-5-phosphate (DXP) and 3-amino-2-oxopropyl phosphate (1-amino-acetone-3-phosphate or AAP) to form pyridoxine 5'-phosphate (PNP) and inorganic phosphate. The sequence is that of Pyridoxine 5'-phosphate synthase from Synechococcus sp. (strain RCC307).